Consider the following 532-residue polypeptide: Wee1-like protein kinase 2 (532 aa).

The disordered stretch occupies residues 123–166; it reads INPFTPDTVRRNSEHYKRKSQRSDDDEDYGPRSKEIQNSSEDES. Positions 188 to 465 constitute a Protein kinase domain; sequence FLELACIGVG…RHDVLCKERA (278 aa). ATP-binding positions include 194–202 and lysine 217; that span reads IGVGEFGSV. Residue aspartate 315 is the Proton acceptor of the active site. Residues asparagine 320 and aspartate 354 each contribute to the Mg(2+) site. Positions 469–495 form a coiled coil; it reads ATQLRKELNVEKFRTAMLERELKEARL.

It belongs to the protein kinase superfamily. Ser/Thr protein kinase family. WEE1 subfamily.

It is found in the nucleus. The catalysed reaction is L-tyrosyl-[protein] + ATP = O-phospho-L-tyrosyl-[protein] + ADP + H(+). Functionally, oocyte-specific protein tyrosine kinase that phosphorylates and inhibits cdk1 and acts as a key regulator of meiosis. Required to maintain meiotic arrest in oocytes by phosphorylating cdk1 at 'Tyr-15', leading to inhibit cdk1 activity and prevent meiotic reentry. This Danio rerio (Zebrafish) protein is Wee1-like protein kinase 2 (wee2).